The primary structure comprises 389 residues: Chalcone synthase (389 aa).

Active-site residues include Cys-164, His-303, and Asn-336.

It belongs to the thiolase-like superfamily. Chalcone/stilbene synthases family. As to quaternary structure, homodimer. As to expression, mainly expressed in flowers, to a lower extent in young leaves, and barely in mature leaves and twigs.

The catalysed reaction is (E)-4-coumaroyl-CoA + 3 malonyl-CoA + 3 H(+) = 2',4,4',6'-tetrahydroxychalcone + 3 CO2 + 4 CoA. Its pathway is secondary metabolite biosynthesis; flavonoid biosynthesis. Its function is as follows. The primary product of this enzyme is 4,2',4',6'-tetrahydroxychalcone (also termed naringenin-chalcone or chalcone) which can under specific conditions spontaneously isomerize into naringenin. The protein is Chalcone synthase of Rhododendron dauricum (Azalea daurica).